A 150-amino-acid polypeptide reads, in one-letter code: UPF0102 protein sll0189 (150 aa).

It belongs to the UPF0102 family.

The protein is UPF0102 protein sll0189 of Synechocystis sp. (strain ATCC 27184 / PCC 6803 / Kazusa).